Reading from the N-terminus, the 850-residue chain is Pierisin (850 aa).

Ricin B-type lectin domains follow at residues 267–409, 413–560, and 564–707; these read GEFM…WNII, FRPI…WDIK, and YQYV…WYLK.

The protein belongs to the pierisin ADP-ribosyltransferase family.

It catalyses the reaction a 2'-deoxyguanosine in DNA + NAD(+) = an N(2)-(ADP-L-ribosyl)-2'-deoxyguanosine in DNA + nicotinamide + H(+). Functionally, ADP-ribosylates double-stranded DNA by targeting the N2 amino group of dG residues. Induces apoptosis in a range of human cell lines. May play a role in destroying cells during pupation and/or defense against parasites. The sequence is that of Pierisin from Pieris brassicae (White butterfly).